The sequence spans 272 residues: HMP-PP phosphatase (272 aa).

Catalysis depends on Asp8, which acts as the Nucleophile. Mg(2+) contacts are provided by Asp8, Asp10, and Asp212.

Belongs to the HAD-like hydrolase superfamily. Cof family. The cofactor is Mg(2+).

It catalyses the reaction 4-amino-2-methyl-5-(diphosphooxymethyl)pyrimidine + H2O = 4-amino-2-methyl-5-(phosphooxymethyl)pyrimidine + phosphate + H(+). In terms of biological role, catalyzes the hydrolysis of 4-amino-2-methyl-5-hydroxymethylpyrimidine pyrophosphate (HMP-PP) to 4-amino-2-methyl-5-hydroxymethylpyrimidine phosphate (HMP-P). The sequence is that of HMP-PP phosphatase from Salmonella agona (strain SL483).